The primary structure comprises 191 residues: Ribonuclease HII (191 aa).

Residues 7 to 191 (ILMAGVDEVG…YSPVADLISK (185 aa)) form the RNase H type-2 domain. A divalent metal cation is bound by residues D13, E14, and D103.

Belongs to the RNase HII family. It depends on Mn(2+) as a cofactor. Mg(2+) is required as a cofactor.

The protein resides in the cytoplasm. It catalyses the reaction Endonucleolytic cleavage to 5'-phosphomonoester.. In terms of biological role, endonuclease that specifically degrades the RNA of RNA-DNA hybrids. This chain is Ribonuclease HII, found in Legionella pneumophila (strain Paris).